The primary structure comprises 469 residues: Uronate isomerase (469 aa).

Belongs to the metallo-dependent hydrolases superfamily. Uronate isomerase family.

It catalyses the reaction D-glucuronate = D-fructuronate. The catalysed reaction is aldehydo-D-galacturonate = keto-D-tagaturonate. Its pathway is carbohydrate metabolism; pentose and glucuronate interconversion. The polypeptide is Uronate isomerase (Corynebacterium efficiens (strain DSM 44549 / YS-314 / AJ 12310 / JCM 11189 / NBRC 100395)).